A 439-amino-acid polypeptide reads, in one-letter code: uncharacterized protein (439 aa).

An N-terminal signal peptide occupies residues 1–22; it reads MWVALKRFGFLSGLLALTVLSA. A lipid anchor (N-palmitoyl cysteine) is attached at Cys-23. The S-diacylglycerol cysteine moiety is linked to residue Cys-23.

This sequence belongs to the MG067/MG068/MG395 family.

Its subcellular location is the cell membrane. This is an uncharacterized protein from Mycoplasma pneumoniae (strain ATCC 29342 / M129 / Subtype 1) (Mycoplasmoides pneumoniae).